The following is a 1157-amino-acid chain: Nitric oxide synthase, inducible (1157 aa).

The short motif at 23 to 27 (DINNN) is the DINNN-motif; mediates interaction with SPSB1, SPSB2 and SPSB4 element. The disordered stretch occupies residues 29-64 (EKLRQASSSPVTQDDPKCPSRSRHRNECSQPLAETA). Cys110 and Cys115 together coordinate Zn(2+). A heme b-binding site is contributed by Cys200. The L-arginine site is built by Gln263, Trp372, Tyr373, and Glu377. 4 residues coordinate (6R)-L-erythro-5,6,7,8-tetrahydrobiopterin: Arg381, Ile462, Trp463, and Phe476. Position 491 (Tyr491) interacts with heme b. Positions 515–535 (FKVLVKAVLFAAVLMHKTMAA) are calmodulin-binding. One can recognise a Flavodoxin-like domain in the interval 539–677 (ATILFATETG…AFRGWAVQTF (139 aa)). FMN contacts are provided by Thr545, Glu546, Thr547, Arg549, Ser550, Ser591, Thr592, Ser628, Cys635, Glu661, and Gln665. An FAD-binding FR-type domain is found at 730–970 (KYVFSMRLKS…VRSASGFQLP (241 aa)). An NADP(+)-binding site is contributed by Arg750. FAD-binding residues include His772, Arg906, Tyr908, Ser909, Thr924, and Ala926. An NADP(+)-binding site is contributed by Thr929. FAD is bound by residues Tyr930, Val943, Cys944, and Ser945. NADP(+)-binding residues include Thr984, Arg1017, Ser1046, Arg1047, Lys1053, Tyr1055, Gln1057, and Asp1090. The segment at 1138-1157 (KEGAVGPPSDPRAPGAHGKS) is disordered.

This sequence belongs to the NOS family. As to quaternary structure, homodimer. Interacts with NHERF1. Interacts with GAPDH; induced by oxidatively-modified low-densitity lipoprotein (LDL(ox)). Interacts with S100A8 and S100A9 to form the iNOS-S100A8/9 transnitrosylase complex. Interacts with SPSB1, SPSB2 and SPSB4. Interacts with ELOC and CUL5 in the presence of SPSB1 or SPSB2 or SPSB4. Forms a complex with ASL, ASS1 and HSP90AA1; the complex regulates cell-autonomous L-arginine synthesis and citrulline recycling while channeling extracellular L-arginine to nitric oxide synthesis pathway. It depends on heme b as a cofactor. FAD is required as a cofactor. FMN serves as cofactor. Requires (6R)-L-erythro-5,6,7,8-tetrahydrobiopterin as cofactor. Post-translationally, polyubiquitinated; mediated by SPSB1, SPSB2 and SPSB4, leading to proteasomal degradation. Detected in both stimulated and unstimulated immune cells and macrophages with little or no up-regulation following cellular stimulation with lipopolysaccharides (LPS) or concanavalin A (ConA).

The protein localises to the cytoplasm. Its subcellular location is the cytosol. The catalysed reaction is 2 L-arginine + 3 NADPH + 4 O2 + H(+) = 2 L-citrulline + 2 nitric oxide + 3 NADP(+) + 4 H2O. Not stimulated by calcium/calmodulin. Its function is as follows. Produces nitric oxide (NO) which is a messenger molecule with diverse functions throughout the body. In macrophages, NO mediates tumoricidal and bactericidal actions. Also has nitrosylase activity and mediates cysteine S-nitrosylation of cytoplasmic target proteins such PTGS2/COX2. As component of the iNOS-S100A8/9 transnitrosylase complex involved in the selective inflammatory stimulus-dependent S-nitrosylation of GAPDH implicated in regulation of the GAIT complex activity and probably multiple targets including ANXA5, EZR, MSN and VIM. Involved in inflammation, enhances the synthesis of pro-inflammatory mediators such as IL6 and IL8. This is Nitric oxide synthase, inducible (NOS2) from Sus scrofa (Pig).